Consider the following 481-residue polypeptide: UDP-N-acetylmuramoylalanine--D-glutamate ligase (481 aa).

108-114 (GTNGKTS) contacts ATP.

Belongs to the MurCDEF family.

It is found in the cytoplasm. It carries out the reaction UDP-N-acetyl-alpha-D-muramoyl-L-alanine + D-glutamate + ATP = UDP-N-acetyl-alpha-D-muramoyl-L-alanyl-D-glutamate + ADP + phosphate + H(+). The protein operates within cell wall biogenesis; peptidoglycan biosynthesis. In terms of biological role, cell wall formation. Catalyzes the addition of glutamate to the nucleotide precursor UDP-N-acetylmuramoyl-L-alanine (UMA). This is UDP-N-acetylmuramoylalanine--D-glutamate ligase from Bifidobacterium longum subsp. infantis (strain ATCC 15697 / DSM 20088 / JCM 1222 / NCTC 11817 / S12).